Reading from the N-terminus, the 197-residue chain is MMFPQSSSRHSGSSHMPQQLKFTTSDSCDRIKDEFQLLQAQYHSLKLECDKLAGEKSEMQRHYVMYYEMSYGLNIEMHKQAEIVKRLHGICAQVLPYLSQEHQQQVLGAIERAKQVTAPELNSIIRQLQVHQLSQLQALALPLTSLPMGLQAPSLPISASSGLLSLSALGSQGHLPKEDKNGHEGDRRPDDDGDKSD.

Residues 1–15 (MMFPQSSSRHSGSSH) are compositionally biased toward low complexity. Disordered regions lie at residues 1-20 (MMFPQSSSRHSGSSHMPQQL) and 169-197 (LGSQGHLPKEDKNGHEGDRRPDDDGDKSD). The CCN domain stretch occupies residues 166–197 (LSALGSQGHLPKEDKNGHEGDRRPDDDGDKSD). Residues 175 to 197 (LPKEDKNGHEGDRRPDDDGDKSD) are compositionally biased toward basic and acidic residues.

It belongs to the WD repeat Groucho/TLE family. As to quaternary structure, monomer. In terms of processing, ubiquitinated by XIAP/BIRC4. Predominantly expressed in brain, testis and ovary. Ubiquitously expressed in the developing embryo. Present in unfertilized and fertilized eggs.

It is found in the nucleus. May act as a transcriptional corepressor. Has a possible role in the negative regulation of proteins containing WD-40 repeats. May be required for the initiation and maintenance of the differentiated state. The chain is Amino-terminal enhancer of split (aes) from Xenopus laevis (African clawed frog).